We begin with the raw amino-acid sequence, 166 residues long: Large ribosomal subunit protein uL10 (166 aa).

It belongs to the universal ribosomal protein uL10 family. As to quaternary structure, part of the ribosomal stalk of the 50S ribosomal subunit. The N-terminus interacts with L11 and the large rRNA to form the base of the stalk. The C-terminus forms an elongated spine to which L12 dimers bind in a sequential fashion forming a multimeric L10(L12)X complex.

Forms part of the ribosomal stalk, playing a central role in the interaction of the ribosome with GTP-bound translation factors. This is Large ribosomal subunit protein uL10 from Aromatoleum aromaticum (strain DSM 19018 / LMG 30748 / EbN1) (Azoarcus sp. (strain EbN1)).